A 162-amino-acid chain; its full sequence is uncharacterized protein (162 aa).

A signal peptide spans methionine 1 to threonine 21.

This is an uncharacterized protein from Caenorhabditis elegans.